Here is a 68-residue protein sequence, read N- to C-terminus: uncharacterized protein (68 aa).

Residues 24 to 44 (AHICKCIAMFFVVAGVVLMFF) traverse the membrane as a helical segment.

It is found in the endoplasmic reticulum. Its subcellular location is the membrane. This is an uncharacterized protein from Saccharomyces cerevisiae (strain ATCC 204508 / S288c) (Baker's yeast).